Reading from the N-terminus, the 275-residue chain is MENTENSVDSKSIKTSETKILHGSKSMDSGISLEESYKMDYPEMGLCIIINNKNFHENTGMACRSGTDVDAANLRETFMNLKYEVRIKNDLTCKEMLELMSNVSKEDHSKRSSFICVLLSHGEEGIIFGTNGPVNLKKLASFFRGDYCRSLTGKPKLFIIQACRGTELDCGIETDSGAEDDMACQKIPVEADFLYAYSTAPGYFSWRNAKNGSWFIQALCEMLKKHAHRLELMHILTRVNRKVAIEYESFSTDSAFHAKKQIPCIMSMLTKELYF.

Met-1 carries the post-translational modification N-acetylmethionine. 2 propeptides span residues 1–9 (MENTENSVD) and 10–28 (SKSIKTSETKILHGSKSMD). Residue Lys-11 is modified to N6-acetyllysine. Ser-26 bears the Phosphoserine mark. Residues His-121 and Cys-163 contribute to the active site. An S-nitrosocysteine; in inhibited form modification is found at Cys-163.

This sequence belongs to the peptidase C14A family. Heterotetramer that consists of two anti-parallel arranged heterodimers, each one formed by a 17 kDa (p17) and a 12 kDa (p12) subunit. Interacts with BIRC6/bruce. In terms of processing, cleavage by granzyme B, caspase-6, caspase-8 and caspase-10 generates the two active subunits. Additional processing of the propeptides is likely due to the autocatalytic activity of the activated protease. Active heterodimers between the small subunit of caspase-7 protease and the large subunit of caspase-3 also occur and vice versa. S-nitrosylated on its catalytic site cysteine in unstimulated cell lines and denitrosylated upon activation of the Fas apoptotic pathway, associated with an increase in intracellular caspase activity. Fas therefore activates caspase-3 not only by inducing the cleavage of the caspase zymogen to its active subunits, but also by stimulating the denitrosylation of its active site thiol. Post-translationally, ubiquitinated by BIRC6; this activity is inhibited by DIABLO/SMAC.

It localises to the cytoplasm. The enzyme catalyses Strict requirement for an Asp residue at positions P1 and P4. It has a preferred cleavage sequence of Asp-Xaa-Xaa-Asp-|- with a hydrophobic amino-acid residue at P2 and a hydrophilic amino-acid residue at P3, although Val or Ala are also accepted at this position.. With respect to regulation, inhibited by BIRC6; following inhibition of BIRC6-caspase binding by DIABLO/SMAC, BIRC6 is subjected to caspase cleavage, leading to an increase in active caspases. In terms of biological role, involved in the activation cascade of caspases responsible for apoptosis execution. At the onset of apoptosis, it proteolytically cleaves poly(ADP-ribose) polymerase PARP1 at a '216-Asp-|-Gly-217' bond. Cleaves and activates sterol regulatory element binding proteins (SREBPs) between the basic helix-loop-helix leucine zipper domain and the membrane attachment domain. Cleaves and activates caspase-6, -7 and -9 (CASP6, CASP7 and CASP9, respectively). Cleaves and inactivates interleukin-18 (IL18). Triggers cell adhesion in sympathetic neurons through RET cleavage. Cleaves IL-1 beta between an Asp and an Ala, releasing the mature cytokine which is involved in a variety of inflammatory processes. Cleaves and inhibits serine/threonine-protein kinase AKT1 in response to oxidative stress. Acts as an inhibitor of type I interferon production during virus-induced apoptosis by mediating cleavage of antiviral proteins CGAS, IRF3 and MAVS, thereby preventing cytokine overproduction. Also involved in pyroptosis by mediating cleavage and activation of gasdermin-E (GSDME). Cleaves XRCC4 and phospholipid scramblase proteins XKR4, XKR8 and XKR9, leading to promote phosphatidylserine exposure on apoptotic cell surface. Cleaves BIRC6 following inhibition of BIRC6-caspase binding by DIABLO/SMAC. The polypeptide is Caspase-3 (CASP3) (Bos taurus (Bovine)).